The chain runs to 285 residues: MDADELELKGHLKKLKKEELLRRKQLKESNLQKRELEYNNASKNTSIYISGLPTDKTTKEGLTEQFCKYGMIRTNRDGEPLCKLYVNDKGAFKGDALITYSKEESVTLAIEMMNESIFLGKQIRVERAQFQNKEGDNMHGKENDLKEFNGPEPPIKRLKKAKSEGEGEVIDYNDDESLAKADRTVIFANVFNIYKSYTNDDINDIQEDLLEGCEEIGQVDSISVSPNKGEATVVFKNNKVALQCCKIMTGRYFDGQKLLAFISGDENTSSTSDKNEDSEVEDDLI.

The RRM 1 domain occupies 45 to 130; the sequence is TSIYISGLPT…KQIRVERAQF (86 aa). A compositionally biased stretch (basic and acidic residues) spans 135-149; sequence GDNMHGKENDLKEFN. The segment at 135 to 154 is disordered; the sequence is GDNMHGKENDLKEFNGPEPP. Position 163 is a phosphoserine (Ser163). The region spanning 183-265 is the RRM 2 domain; sequence RTVIFANVFN…QKLLAFISGD (83 aa). The tract at residues 265-285 is disordered; the sequence is DENTSSTSDKNEDSEVEDDLI. The span at 276–285 shows a compositional bias: acidic residues; the sequence is EDSEVEDDLI.

It belongs to the HTATSF1 family. In terms of assembly, interacts with PRP11. Associates with the U2 snRNA.

In terms of biological role, U2 snRNP protein which helps to refold U2 into a structure favorable for its binding to SF3b and SF3a prior to spliceosome assembly. Mediates functional interactions between U2 RNA and PRP5. Enforces ATP dependence during formation of the prespliceosome by brokering an interaction between PRP5 and the U2 snRNP that depends on correct U2 RNA structure. The sequence is that of Cold sensitive U2 snRNA suppressor 2 (CUS2) from Saccharomyces cerevisiae (strain ATCC 204508 / S288c) (Baker's yeast).